Consider the following 721-residue polypeptide: Polyribonucleotide nucleotidyltransferase (721 aa).

Mg(2+)-binding residues include D495 and D501. Residues P562–I621 form the KH domain. The 69-residue stretch at G631 to R699 folds into the S1 motif domain.

Belongs to the polyribonucleotide nucleotidyltransferase family. The cofactor is Mg(2+).

It is found in the cytoplasm. It catalyses the reaction RNA(n+1) + phosphate = RNA(n) + a ribonucleoside 5'-diphosphate. Its function is as follows. Involved in mRNA degradation. Catalyzes the phosphorolysis of single-stranded polyribonucleotides processively in the 3'- to 5'-direction. The protein is Polyribonucleotide nucleotidyltransferase of Synechococcus sp. (strain CC9605).